Reading from the N-terminus, the 156-residue chain is Ribosomal RNA large subunit methyltransferase H (156 aa).

Positions 72 and 104 each coordinate S-adenosyl-L-methionine.

Belongs to the RNA methyltransferase RlmH family. Homodimer.

The protein localises to the cytoplasm. It catalyses the reaction pseudouridine(1915) in 23S rRNA + S-adenosyl-L-methionine = N(3)-methylpseudouridine(1915) in 23S rRNA + S-adenosyl-L-homocysteine + H(+). Its function is as follows. Specifically methylates the pseudouridine at position 1915 (m3Psi1915) in 23S rRNA. The sequence is that of Ribosomal RNA large subunit methyltransferase H from Maricaulis maris (strain MCS10) (Caulobacter maris).